A 408-amino-acid polypeptide reads, in one-letter code: LL-diaminopimelate aminotransferase (408 aa).

Substrate-binding residues include Tyr15 and Gly42. Pyridoxal 5'-phosphate-binding positions include Tyr72, Ser108–Lys109, Tyr132, Asn187, Tyr218, and Ser246–Ser248. 3 residues coordinate substrate: Lys109, Tyr132, and Asn187. The residue at position 249 (Lys249) is an N6-(pyridoxal phosphate)lysine. 2 residues coordinate pyridoxal 5'-phosphate: Arg257 and Asn292. Asn292 and Arg388 together coordinate substrate.

This sequence belongs to the class-I pyridoxal-phosphate-dependent aminotransferase family. LL-diaminopimelate aminotransferase subfamily. As to quaternary structure, homodimer. Requires pyridoxal 5'-phosphate as cofactor.

It catalyses the reaction (2S,6S)-2,6-diaminopimelate + 2-oxoglutarate = (S)-2,3,4,5-tetrahydrodipicolinate + L-glutamate + H2O + H(+). Its pathway is amino-acid biosynthesis; L-lysine biosynthesis via DAP pathway; LL-2,6-diaminopimelate from (S)-tetrahydrodipicolinate (aminotransferase route): step 1/1. Its function is as follows. Involved in the synthesis of meso-diaminopimelate (m-DAP or DL-DAP), required for both lysine and peptidoglycan biosynthesis. Catalyzes the direct conversion of tetrahydrodipicolinate to LL-diaminopimelate. This is LL-diaminopimelate aminotransferase from Synechococcus sp. (strain CC9311).